We begin with the raw amino-acid sequence, 521 residues long: CDP-diacylglycerol--glycerol-3-phosphate 3-phosphatidyltransferase (521 aa).

91–98 (ASLYLGKS) lines the ATP pocket. PLD phosphodiesterase domains lie at 177-203 (GLGL…SNDY) and 419-457 (NGWS…TRRA). Active-site residues include H182, K184, and D189.

This sequence belongs to the CDP-alcohol phosphatidyltransferase class-II family.

It localises to the mitochondrion. It carries out the reaction a CDP-1,2-diacyl-sn-glycerol + sn-glycerol 3-phosphate = a 1,2-diacyl-sn-glycero-3-phospho-(1'-sn-glycero-3'-phosphate) + CMP + H(+). Its pathway is phospholipid metabolism; phosphatidylglycerol biosynthesis; phosphatidylglycerol from CDP-diacylglycerol: step 1/2. Functionally, essential for the viability of mitochondrial petite mutant. Catalyzes the committed step to the synthesis of the acidic phospholipids. In Saccharomyces pastorianus (Lager yeast), this protein is CDP-diacylglycerol--glycerol-3-phosphate 3-phosphatidyltransferase (PGS1).